Reading from the N-terminus, the 362-residue chain is Inactive 2'-5' oligoadenylate synthetase 1C (362 aa).

This sequence belongs to the 2-5A synthase family. As to expression, expressed at highest level in brain with lesser amounts in spleen, kidney, stomach, liver, intestine, ovary, skin and testis. Not detected in lung, thymus, heart and uterus.

In terms of biological role, does not have 2'-5'-OAS activity, but can bind double-stranded RNA. The sequence is that of Inactive 2'-5' oligoadenylate synthetase 1C from Mus musculus (Mouse).